We begin with the raw amino-acid sequence, 943 residues long: Leucine--tRNA ligase (943 aa).

A 'HIGH' region motif is present at residues 40-51 (PYPSGAGLHVGH). The 'KMSKS' region signature appears at 717–721 (KMSKS). Residue Lys720 participates in ATP binding.

Belongs to the class-I aminoacyl-tRNA synthetase family.

It localises to the cytoplasm. The catalysed reaction is tRNA(Leu) + L-leucine + ATP = L-leucyl-tRNA(Leu) + AMP + diphosphate. The polypeptide is Leucine--tRNA ligase (Bacteroides fragilis (strain YCH46)).